The sequence spans 422 residues: O-mycaminosyltylonolide 6-deoxyallosyltransferase (422 aa).

Belongs to the glycosyltransferase 28 family.

It catalyses the reaction 5-O-beta-D-mycaminosyltylonolide + dTDP-6-deoxy-alpha-D-allose = demethyllactenocin + dTDP + H(+). Functionally, involved in the biosynthesis of the macrolide antibiotic tylosin derived from the polyketide lactone tylactone. Catalyzes the transfer of 6-deoxy-alpha-D-allose from dTDP-6-deoxy-alpha-D-allose to O-mycaminosyltylonolide (OMT) to yield demethyllactenocin. This Streptomyces fradiae (Streptomyces roseoflavus) protein is O-mycaminosyltylonolide 6-deoxyallosyltransferase.